Reading from the N-terminus, the 67-residue chain is Surface composition regulator (67 aa).

Belongs to the GlgS family.

In terms of biological role, major determinant of cell surface composition. Negatively regulates motility, adhesion and synthesis of biofilm exopolysaccharides. This is Surface composition regulator from Salmonella enteritidis PT4 (strain P125109).